The primary structure comprises 289 residues: Oxaloacetate decarboxylase (289 aa).

S50 provides a ligand contact to substrate. D88 contacts Mg(2+). Positions 159 and 235 each coordinate substrate.

Belongs to the isocitrate lyase/PEP mutase superfamily. Oxaloacetate decarboxylase family. As to quaternary structure, homotetramer; dimer of dimers. It depends on Mg(2+) as a cofactor.

The catalysed reaction is oxaloacetate + H(+) = pyruvate + CO2. Functionally, catalyzes the decarboxylation of oxaloacetate into pyruvate. Seems to play a role in maintaining cellular concentrations of bicarbonate and pyruvate. This chain is Oxaloacetate decarboxylase, found in Pseudomonas savastanoi pv. phaseolicola (strain 1448A / Race 6) (Pseudomonas syringae pv. phaseolicola (strain 1448A / Race 6)).